The chain runs to 403 residues: Esterase LipC (403 aa).

Active-site residues include S237, D334, and H367.

This sequence belongs to the 'GDXG' lipolytic enzyme family.

The protein localises to the cell surface. It is found in the secreted. The protein resides in the cell wall. Its subcellular location is the capsule. The enzyme catalyses a fatty acid ester + H2O = an aliphatic alcohol + a fatty acid + H(+). The catalysed reaction is a butanoate ester + H2O = an aliphatic alcohol + butanoate + H(+). It carries out the reaction a hexanoate ester + H2O = an aliphatic alcohol + hexanoate + H(+). It catalyses the reaction an acetyl ester + H2O = an aliphatic alcohol + acetate + H(+). The enzyme catalyses an octanoate ester + H2O = an aliphatic alcohol + octanoate + H(+). The catalysed reaction is decanoate ester + H2O = decanoate + an aliphatic alcohol + H(+). In terms of biological role, esterase that can hydrolyze short-chain esters with the carbon chain containing 2 to 10 carbon atoms. Does not have lipase activity. Is highly immunogenic and elicits strong humoral immune responses in both HIV-negative (HIV-) and HIV-positive (HIV+) tuberculosis (TB) patients. Also elicits pro-inflammatory cytokine and chemokine responses from macrophages and pulmonary epithelial cells. May participate in the progression of active tuberculosis both by contributing to the utilization of lipid substrates for bacterial growth and replication, and by modulating immune responses. The polypeptide is Esterase LipC (Mycobacterium tuberculosis (strain ATCC 25618 / H37Rv)).